A 542-amino-acid chain; its full sequence is Chaperonin GroEL 2 (542 aa).

ATP contacts are provided by residues Thr-30–Pro-33, Lys-51, Asp-87–Thr-91, Gly-415, and Asp-496.

The protein belongs to the chaperonin (HSP60) family. As to quaternary structure, forms a cylinder of 14 subunits composed of two heptameric rings stacked back-to-back. Interacts with the co-chaperonin GroES.

It is found in the cytoplasm. It catalyses the reaction ATP + H2O + a folded polypeptide = ADP + phosphate + an unfolded polypeptide.. Its function is as follows. Together with its co-chaperonin GroES, plays an essential role in assisting protein folding. The GroEL-GroES system forms a nano-cage that allows encapsulation of the non-native substrate proteins and provides a physical environment optimized to promote and accelerate protein folding. The polypeptide is Chaperonin GroEL 2 (Azorhizobium caulinodans (strain ATCC 43989 / DSM 5975 / JCM 20966 / LMG 6465 / NBRC 14845 / NCIMB 13405 / ORS 571)).